A 199-amino-acid chain; its full sequence is MSGHAGAVSDLVDQLSKLPGIGRKSAERLAFHLLRVHEDEALALASAIRRVRTDVRYCSVCYNLSETELCRICSDPKRDATRLCVVEQPRDLLSLDASGVYSGLYHVLLGRIAPLDGITPDQLTIDSLVERVRTGNFSEIIMATNPTVEGDGTSLYLSNLMQEFPVEITRLARGITSGSVLEYANREIIADALTGRQRL.

A C4-type zinc finger spans residues 58 to 73 (CSVCYNLSETELCRIC). The Toprim domain maps to 81 to 176 (TRLCVVEQPR…EITRLARGIT (96 aa)).

Belongs to the RecR family.

Its function is as follows. May play a role in DNA repair. It seems to be involved in an RecBC-independent recombinational process of DNA repair. It may act with RecF and RecO. The chain is Recombination protein RecR from Rhodopirellula baltica (strain DSM 10527 / NCIMB 13988 / SH1).